Consider the following 289-residue polypeptide: Formamidopyrimidine-DNA glycosylase (289 aa).

Pro2 functions as the Schiff-base intermediate with DNA in the catalytic mechanism. Catalysis depends on Glu3, which acts as the Proton donor. Lys61 acts as the Proton donor; for beta-elimination activity in catalysis. DNA-binding residues include His96, Arg115, and Lys161. Residues 247–281 (SAYGQENLPCPRCGAPIKREKFMNRSSFSCPRCQP) form an FPG-type zinc finger. The active-site Proton donor; for delta-elimination activity is the Arg271.

The protein belongs to the FPG family. As to quaternary structure, monomer. Requires Zn(2+) as cofactor.

The enzyme catalyses Hydrolysis of DNA containing ring-opened 7-methylguanine residues, releasing 2,6-diamino-4-hydroxy-5-(N-methyl)formamidopyrimidine.. It carries out the reaction 2'-deoxyribonucleotide-(2'-deoxyribose 5'-phosphate)-2'-deoxyribonucleotide-DNA = a 3'-end 2'-deoxyribonucleotide-(2,3-dehydro-2,3-deoxyribose 5'-phosphate)-DNA + a 5'-end 5'-phospho-2'-deoxyribonucleoside-DNA + H(+). In terms of biological role, involved in base excision repair of DNA damaged by oxidation or by mutagenic agents. Acts as a DNA glycosylase that recognizes and removes damaged bases. Has a preference for oxidized purines, such as 7,8-dihydro-8-oxoguanine (8-oxoG). Has AP (apurinic/apyrimidinic) lyase activity and introduces nicks in the DNA strand. Cleaves the DNA backbone by beta-delta elimination to generate a single-strand break at the site of the removed base with both 3'- and 5'-phosphates. The protein is Formamidopyrimidine-DNA glycosylase of Rhodococcus erythropolis (strain PR4 / NBRC 100887).